A 414-amino-acid chain; its full sequence is UDP-N-acetylmuramoylalanine--D-glutamate ligase (414 aa).

Residue 104–110 (GSNGKST) participates in ATP binding.

Belongs to the MurCDEF family.

The protein resides in the cytoplasm. It catalyses the reaction UDP-N-acetyl-alpha-D-muramoyl-L-alanine + D-glutamate + ATP = UDP-N-acetyl-alpha-D-muramoyl-L-alanyl-D-glutamate + ADP + phosphate + H(+). The protein operates within cell wall biogenesis; peptidoglycan biosynthesis. Cell wall formation. Catalyzes the addition of glutamate to the nucleotide precursor UDP-N-acetylmuramoyl-L-alanine (UMA). The polypeptide is UDP-N-acetylmuramoylalanine--D-glutamate ligase (Francisella philomiragia subsp. philomiragia (strain ATCC 25017 / CCUG 19701 / FSC 153 / O#319-036)).